The sequence spans 458 residues: Tubulin beta chain (458 aa).

Residues Gln-11, Glu-69, Ser-138, Gly-142, Thr-143, Gly-144, Asn-204, and Asn-226 each contribute to the GTP site. Mg(2+) is bound at residue Glu-69. The tract at residues 426 to 458 (EAATVEGEEEEDEYAEGGVVNGDQSYDEPYQAA) is disordered. The segment covering 431–440 (EGEEEEDEYA) has biased composition (acidic residues).

This sequence belongs to the tubulin family. Dimer of alpha and beta chains. A typical microtubule is a hollow water-filled tube with an outer diameter of 25 nm and an inner diameter of 15 nM. Alpha-beta heterodimers associate head-to-tail to form protofilaments running lengthwise along the microtubule wall with the beta-tubulin subunit facing the microtubule plus end conferring a structural polarity. Microtubules usually have 13 protofilaments but different protofilament numbers can be found in some organisms and specialized cells. The cofactor is Mg(2+).

It is found in the cytoplasm. The protein resides in the cytoskeleton. In terms of biological role, tubulin is the major constituent of microtubules, a cylinder consisting of laterally associated linear protofilaments composed of alpha- and beta-tubulin heterodimers. Microtubules grow by the addition of GTP-tubulin dimers to the microtubule end, where a stabilizing cap forms. Below the cap, tubulin dimers are in GDP-bound state, owing to GTPase activity of alpha-tubulin. This Pyropia yezoensis (Susabi-nori) protein is Tubulin beta chain (TUBB1).